Here is a 339-residue protein sequence, read N- to C-terminus: 3-isopropylmalate dehydrogenase (339 aa).

The substrate site is built by arginine 88, arginine 98, arginine 122, and aspartate 212. Mg(2+)-binding residues include aspartate 212, aspartate 236, and aspartate 240. 272–284 (GSAPDIAGQGIAD) serves as a coordination point for NAD(+).

The protein belongs to the isocitrate and isopropylmalate dehydrogenases family. LeuB type 2 subfamily. As to quaternary structure, homodimer. It depends on Mg(2+) as a cofactor. The cofactor is Mn(2+).

It localises to the cytoplasm. The enzyme catalyses (2R,3S)-3-isopropylmalate + NAD(+) = 4-methyl-2-oxopentanoate + CO2 + NADH. It functions in the pathway amino-acid biosynthesis; L-leucine biosynthesis; L-leucine from 3-methyl-2-oxobutanoate: step 3/4. Its function is as follows. Catalyzes the oxidation of 3-carboxy-2-hydroxy-4-methylpentanoate (3-isopropylmalate) to 3-carboxy-4-methyl-2-oxopentanoate. The product decarboxylates to 4-methyl-2 oxopentanoate. This is 3-isopropylmalate dehydrogenase from Corynebacterium urealyticum (strain ATCC 43042 / DSM 7109).